Here is a 187-residue protein sequence, read N- to C-terminus: MAIGMSELKKGLKIELGGVPYRIVEYQHVKPGKGAAFVRAKIKSFLDGKVIEKTFHAGDKCEEPNLVEKTMQYLYHDGDTYQFMDIESYEQIALNDSQVGEASKWMLDGMQVQVLLHNDKAISVDVPQVVALKIVETAPNFKGDTSSASKKPATLETGAVVQVPFHVLEGEIIKVNTETEEYLEKVK.

This sequence belongs to the elongation factor P family.

It localises to the cytoplasm. It participates in protein biosynthesis; polypeptide chain elongation. Involved in peptide bond synthesis. Stimulates efficient translation and peptide-bond synthesis on native or reconstituted 70S ribosomes in vitro. Probably functions indirectly by altering the affinity of the ribosome for aminoacyl-tRNA, thus increasing their reactivity as acceptors for peptidyl transferase. This Helicobacter pylori (strain G27) protein is Elongation factor P.